Here is a 472-residue protein sequence, read N- to C-terminus: Adenosylhomocysteinase (472 aa).

Substrate contacts are provided by T64, D138, and E198. 199-201 (TTT) is a binding site for NAD(+). K228 and D232 together coordinate substrate. NAD(+)-binding positions include N233, 262 to 267 (GFGDVG), E285, N320, 341 to 343 (IGH), and N386.

This sequence belongs to the adenosylhomocysteinase family. NAD(+) is required as a cofactor.

The protein localises to the cytoplasm. It carries out the reaction S-adenosyl-L-homocysteine + H2O = L-homocysteine + adenosine. It participates in amino-acid biosynthesis; L-homocysteine biosynthesis; L-homocysteine from S-adenosyl-L-homocysteine: step 1/1. Its function is as follows. May play a key role in the regulation of the intracellular concentration of adenosylhomocysteine. This Prochlorococcus marinus subsp. pastoris (strain CCMP1986 / NIES-2087 / MED4) protein is Adenosylhomocysteinase.